A 619-amino-acid polypeptide reads, in one-letter code: Transcription factor 7-like 2 (619 aa).

The segment covering 1–11 has biased composition (gly residues); sequence MPQLNGGGGDD. Positions 1–53 are CTNNB1-binding; sequence MPQLNGGGGDDLGANDELISFKDEGEQEEKSSENSSAERDLADVKSSLVNESE. The tract at residues 1–96 is disordered; that stretch reads MPQLNGGGGD…AKRQDGGLFK (96 aa). Residues 19-43 show a composition bias toward basic and acidic residues; the sequence is ISFKDEGEQEEKSSENSSAERDLAD. A Glycyl lysine isopeptide (Lys-Gly) (interchain with G-Cter in SUMO2) cross-link involves residue Lys22. Over residues 47–57 the composition is skewed to polar residues; the sequence is SLVNESETNQN. Over residues 63-91 the composition is skewed to basic and acidic residues; that stretch reads EAERRPPPRSESFRDKSRESLEEAAKRQD. Residues Thr201 and Thr212 each carry the phosphothreonine; by NLK modification. The interval 201–395 is mediates interaction with MAD2L2; it reads TPLITYSNEH…RRWHALSREE (195 aa). Over residues 318-328 the composition is skewed to polar residues; it reads TVKQESSQSDV. Disordered regions lie at residues 318-350, 420-441, 496-547, and 574-619; these read TVKQ…KPHI, RDNY…TNEH, CLSP…AHLS, and DLPP…KSLE. A Glycyl lysine isopeptide (Lys-Gly) (interchain with G-Cter in SUMO) cross-link involves residue Lys320. Basic and acidic residues predominate over residues 335–346; that stretch reads KHQDSKKEEEKK. A DNA-binding region (HMG box) is located at residues 350-418; the sequence is IKKPLNAFML…LHMQLYPGWS (69 aa). The short motif at 425 to 430 is the Nuclear localization signal element; it reads KKKKRK. The interval 459 to 505 is promoter-specific activation domain; it reads SAPKKCRARFGLDQQNNWCGPCRRKKKCVRYIQGEGSCLSPPSSDGS. Positions 496-508 are enriched in low complexity; that stretch reads CLSPPSSDGSLLD. A Glycyl lysine isopeptide (Lys-Gly) (interchain with G-Cter in SUMO2) cross-link involves residue Lys539. Low complexity predominate over residues 574–603; sequence DLPPAALQPAAPSSSIAQPSTSSLHSHSSL. The span at 604–619 shows a compositional bias: polar residues; it reads AGTQPQPLSLVTKSLE.

The protein belongs to the TCF/LEF family. As to quaternary structure, interacts with TGFB1I1. Interacts with CTNNB1 (via the armadillo repeat); forms stable transcription complex. Interacts with EP300. Interacts with NLK. Interacts with CCDC85B (probably through the HMG box); prevents interaction with CTNNB1. Interacts with TNIK. Interacts with MAD2L2; prevents TCF7L2/TCF4 binding to promZIPK/DAPK3oters, negatively modulating its transcriptional activity. Interacts with ZIPK/DAPK3. Interacts with XIAP/BIRC4 and TLE3. Interacts with DDIT3/CHOP. The CTNNB1 and TCF7L2/TCF4 complex interacts with PML (isoform PML-4). Identified in a complex with CTNNB1 and FERMT2. Interacts with SPIN1. Interacts with C11orf84/SPINDOC in a SPIN1-dependent manner. Interacts with DAZAP2; the interaction results in localization of DAZAP2 to the nucleus. In vitro, phosphorylated by TNIK. Post-translationally, phosphorylated at Thr-201 and/or Thr-212 by NLK. Phosphorylation by NLK at these sites inhibits DNA-binding by TCF7L2/TCF4, thereby preventing transcriptional activation of target genes of the canonical Wnt/beta-catenin signaling pathway. In terms of processing, polysumoylated. Sumoylation is enhanced by PIAS family members and desumoylation is enhanced by SENP2. Sumoylation/desumoylation regulates TCF7L2/TCF4 transcription activity in the Wnt/beta-catenin signaling pathway without altering interaction with CTNNB1 nor binding to DNA. Detected in epithelium from small intestine, with the highest expression at the top of the crypts and a gradient of expression from crypt to villus. Detected in colon epithelium and colon cancer, and in epithelium from mammary gland and carcinomas derived therefrom.

It localises to the nucleus. Its subcellular location is the PML body. In terms of biological role, participates in the Wnt signaling pathway and modulates MYC expression by binding to its promoter in a sequence-specific manner. Acts as a repressor in the absence of CTNNB1, and as activator in its presence. Activates transcription from promoters with several copies of the Tcf motif 5'-CCTTTGATC-3' in the presence of CTNNB1. TLE1, TLE2, TLE3 and TLE4 repress transactivation mediated by TCF7L2/TCF4 and CTNNB1. Expression of dominant-negative mutants results in cell-cycle arrest in G1. Necessary for the maintenance of the epithelial stem-cell compartment of the small intestine. In Homo sapiens (Human), this protein is Transcription factor 7-like 2 (TCF7L2).